The following is a 484-amino-acid chain: Acetaldehyde dehydrogenase (acetylating) (484 aa).

Belongs to the aldehyde dehydrogenase family.

The enzyme catalyses acetaldehyde + NAD(+) + CoA = acetyl-CoA + NADH + H(+). It functions in the pathway organosulfur degradation; alkanesulfonate degradation. Its function is as follows. Involved in an anaerobic respiration pathway that converts the sulfonate taurine (2-aminoethanesulfonate) to ammonia, acetate and sulfide. Catalyzes the oxidation of acetaldehyde to acetyl-CoA in the presence of CoASH and NAD(+). Highly prefers NAD(+) over NADP(+). This Bilophila wadsworthia (strain 3_1_6) protein is Acetaldehyde dehydrogenase (acetylating).